The sequence spans 807 residues: Glycerol-3-phosphate acyltransferase (807 aa).

The short motif at 305–310 (CHRSHM) is the HXXXXD motif element.

This sequence belongs to the GPAT/DAPAT family.

The protein resides in the cell inner membrane. The enzyme catalyses sn-glycerol 3-phosphate + an acyl-CoA = a 1-acyl-sn-glycero-3-phosphate + CoA. Its pathway is phospholipid metabolism; CDP-diacylglycerol biosynthesis; CDP-diacylglycerol from sn-glycerol 3-phosphate: step 1/3. The protein is Glycerol-3-phosphate acyltransferase of Aliivibrio fischeri (strain ATCC 700601 / ES114) (Vibrio fischeri).